Consider the following 246-residue polypeptide: DNA repair protein RecO (246 aa).

The protein belongs to the RecO family.

Functionally, involved in DNA repair and RecF pathway recombination. The polypeptide is DNA repair protein RecO (Marinobacter nauticus (strain ATCC 700491 / DSM 11845 / VT8) (Marinobacter aquaeolei)).